We begin with the raw amino-acid sequence, 136 residues long: Outer envelope pore protein 16-4, chloroplastic (136 aa).

The contains 4 beta strands stretch occupies residues Met1–Phe59. A run of 4 helical transmembrane segments spans residues Ser18–Gly34, Ile56–Met72, Trp86–Ile102, and Val110–Cys126.

This sequence belongs to the Tim17/Tim22/Tim23 family. Plastid outer envelope porin OEP16 (TC 1.B.30) subfamily. In terms of assembly, homodimer and oligomers in membrane.

The protein localises to the plastid. It is found in the chloroplast outer membrane. Functionally, voltage-dependent high-conductance channel with a slight cation-selectivity; selective for amino acids but excludes triosephosphates or uncharged sugars. Non-essential amino acid-selective channel protein and translocation pore for NADPH:protochlorophyllide oxidoreductase A (PORA) and possibly PORB. This is Outer envelope pore protein 16-4, chloroplastic (OEP164) from Arabidopsis thaliana (Mouse-ear cress).